The primary structure comprises 121 residues: Glycine cleavage system H protein (121 aa).

The 83-residue stretch at 16–98 (VATVGITAYA…ESGGWFAKIK (83 aa)) folds into the Lipoyl-binding domain. Position 57 is an N6-lipoyllysine (lysine 57).

The protein belongs to the GcvH family. In terms of assembly, the glycine cleavage system is composed of four proteins: P, T, L and H. (R)-lipoate serves as cofactor.

The glycine cleavage system catalyzes the degradation of glycine. The H protein shuttles the methylamine group of glycine from the P protein to the T protein. The polypeptide is Glycine cleavage system H protein (Caulobacter vibrioides (strain NA1000 / CB15N) (Caulobacter crescentus)).